The primary structure comprises 3092 residues: Inhibitory regulator protein IRA1 (3092 aa).

Disordered regions lie at residues 375–430 (HLHH…MASL) and 450–487 (LGQA…NSAN). Positions 379 to 400 (SSSSSKTTNTNSPNSISKTSIK) are enriched in low complexity. Residues 401-430 (QSSVNASGNVSPSQFSTGNDASPTSPMASL) are compositionally biased toward polar residues. Residues 455 to 487 (TSTSTTAATTKTDADTPSTMNTNNNNNNNNSAN) are compositionally biased toward low complexity. Phosphoserine occurs at positions 497 and 915. Disordered regions lie at residues 946 to 988 (SGVP…VLSS) and 1003 to 1023 (TILK…ADDK). The span at 965 to 988 (QSPYSSPPQLQQSDLPSPLSVLSS) shows a compositional bias: low complexity. Ser1342 bears the Phosphoserine mark. In terms of domain architecture, Ras-GAP spans 1725-1930 (NASHILVTEL…DKIFNFLSEL (206 aa)). Residues Ser1753 and Ser3004 each carry the phosphoserine; by PKA modification.

The protein resides in the cytoplasm. Its function is as follows. Inhibitory regulator of the Ras-cyclic AMP pathway in S.cerevisiae. Stimulates the GTPase activity of Ras proteins. This is Inhibitory regulator protein IRA1 (IRA1) from Saccharomyces cerevisiae (strain ATCC 204508 / S288c) (Baker's yeast).